The primary structure comprises 285 residues: Cytochrome P450 monooxygenase eupD (285 aa).

An N-terminal signal peptide occupies residues 1–19 (MSIAGLVTTLPWLMNMLRA). Cys-229 is a binding site for heme.

It belongs to the cytochrome P450 family. Requires heme as cofactor.

It participates in secondary metabolite biosynthesis; terpenoid biosynthesis. In terms of biological role, cytochrome P450 monooxygenase; part of the gene cluster that mediates the biosynthesis of eupenifeldin, a bistropolone meroterpenoid that acts as an antitumor agent. The first step of eupenifeldin biosynthesis is the biosynthesis of 3-methylorcinaldehyde performed by the non-reducing polyketide synthase eupA. Oxidative dearomatization of 3-methylorcinaldehyde likely catalyzed by the FAD-dependent monooxygenase eupB is followed by oxidative ring expansion by the 2-oxoglutarate-dependent dioxygenase eupC to provide the first tropolone metabolite, tropolone stipitaldehyde. In parallel, generation of sesquiterpene alpha-humulene from farnesylpyrophosphate (FPP) is catalyzed by the terpene cyclase eupE. The cytochrome P450 monooxygenase eupD then hydroxylates humulene to humulenol. The putative Diels-Alderase eupF probably catalyzes the formation of the tropolone-humulene skeleton by linking humulenol and the polyketide moiety. The short-chain dehydrogenase/reductase eupG and the flavin-dependent monooxygenase eupH are also essential for eupenifeldin biosynthesis and are likely the additional decorating enzymes of the tropolone-humulene skeleton to produce final eupenifeldin or derivatives. This chain is Cytochrome P450 monooxygenase eupD, found in Phoma sp.